Consider the following 181-residue polypeptide: Adenine phosphoribosyltransferase 2 (181 aa).

Serine 2 bears the N-acetylserine mark.

It belongs to the purine/pyrimidine phosphoribosyltransferase family.

The protein resides in the cytoplasm. It catalyses the reaction AMP + diphosphate = 5-phospho-alpha-D-ribose 1-diphosphate + adenine. Its pathway is purine metabolism; AMP biosynthesis via salvage pathway; AMP from adenine: step 1/1. Its function is as follows. Catalyzes a salvage reaction resulting in the formation of AMP, that is energically less costly than de novo synthesis. May lack catalytic activity. This chain is Adenine phosphoribosyltransferase 2 (APT2), found in Saccharomyces cerevisiae (strain ATCC 204508 / S288c) (Baker's yeast).